Consider the following 357-residue polypeptide: Glutamate 5-kinase (357 aa).

An ATP-binding site is contributed by lysine 7. Positions 43, 130, and 142 each coordinate substrate. ATP-binding positions include 162–163 and 205–211; these read TD and TGGMTTK. Residues 270 to 353 form the PUA domain; that stretch reads EGELQLDAGA…PVVVHRDGLV (84 aa).

Belongs to the glutamate 5-kinase family.

It localises to the cytoplasm. It catalyses the reaction L-glutamate + ATP = L-glutamyl 5-phosphate + ADP. It functions in the pathway amino-acid biosynthesis; L-proline biosynthesis; L-glutamate 5-semialdehyde from L-glutamate: step 1/2. Its function is as follows. Catalyzes the transfer of a phosphate group to glutamate to form L-glutamate 5-phosphate. In Synechococcus sp. (strain CC9605), this protein is Glutamate 5-kinase.